The chain runs to 518 residues: Chaperonin GroEL (518 aa).

Residues 30–33, K51, 87–91, and G415 each bind ATP; these read TLGP and DGTTT.

Belongs to the chaperonin (HSP60) family. As to quaternary structure, forms a cylinder of 14 subunits composed of two heptameric rings stacked back-to-back. Interacts with the co-chaperonin GroES.

The protein localises to the cytoplasm. The enzyme catalyses ATP + H2O + a folded polypeptide = ADP + phosphate + an unfolded polypeptide.. Together with its co-chaperonin GroES, plays an essential role in assisting protein folding. The GroEL-GroES system forms a nano-cage that allows encapsulation of the non-native substrate proteins and provides a physical environment optimized to promote and accelerate protein folding. In Desulfotalea psychrophila (strain LSv54 / DSM 12343), this protein is Chaperonin GroEL.